The chain runs to 748 residues: Basic juvenile hormone-suppressible protein 1 (748 aa).

An N-terminal signal peptide occupies residues 1–17; that stretch reads MRVLVLVASLGLRGSVV.

The protein belongs to the hemocyanin family. Fat body, and hemolymph of larvae.

This is Basic juvenile hormone-suppressible protein 1 (BJSP-1) from Trichoplusia ni (Cabbage looper).